Reading from the N-terminus, the 391-residue chain is Phosphoglycerate kinase (391 aa).

Residues 21–23, arginine 36, 59–62, arginine 113, and arginine 146 contribute to the substrate site; these read DLN and HLGR. ATP contacts are provided by residues lysine 197, glutamate 319, and 345–348; that span reads GGDT.

The protein belongs to the phosphoglycerate kinase family. In terms of assembly, monomer.

The protein resides in the cytoplasm. The enzyme catalyses (2R)-3-phosphoglycerate + ATP = (2R)-3-phospho-glyceroyl phosphate + ADP. It participates in carbohydrate degradation; glycolysis; pyruvate from D-glyceraldehyde 3-phosphate: step 2/5. In Colwellia psychrerythraea (strain 34H / ATCC BAA-681) (Vibrio psychroerythus), this protein is Phosphoglycerate kinase.